Reading from the N-terminus, the 1219-residue chain is Pheromone-regulated membrane protein 10 (1219 aa).

Residues 1-11 (MMRTQSDEHVA) show a composition bias toward basic and acidic residues. Disordered regions lie at residues 1–273 (MMRT…IERE), 303–490 (LASF…DPFT), 503–533 (HDDD…EDYV), and 555–713 (EGNK…RPVK). Over residues 42-53 (DENDDGHDDSDE) the composition is skewed to acidic residues. A compositionally biased stretch (low complexity) spans 57-68 (SVVIPTPSVVIV). Over residues 104–115 (LKSPGTPTTYSP) the composition is skewed to polar residues. Over residues 136–155 (GSSLSSTTLMNTLLNSSGLG) the composition is skewed to low complexity. Acidic residues-rich tracts occupy residues 159-171 (TESE…DEEV) and 219-231 (QEEE…DDDG). 3 stretches are compositionally biased toward basic and acidic residues: residues 259–273 (ADRA…IERE), 330–346 (DDQR…RREN), and 395–421 (LDRR…EKER). Positions 422–432 (QHHHHNHHHHH) are enriched in basic residues. Over residues 435-446 (ETGPNTGASSPF) the composition is skewed to polar residues. The span at 448–470 (EEEKDREAEEAEILRDQARDLVN) shows a compositional bias: basic and acidic residues. Residues 565–577 (TTVGDGTSTGDVS) show a composition bias toward low complexity. Over residues 598–615 (KSKTKTTQKLGLKKKKKE) the composition is skewed to basic residues. Basic and acidic residues predominate over residues 616–641 (LLKIIEDQRKEKEENKKRPKWYDKSR). Positions 642–652 (STSPSPGGTPA) are enriched in low complexity. Residues 653-673 (PHHHHHIPGLHLHHHTKGHQR) are compositionally biased toward basic residues. A compositionally biased stretch (basic and acidic residues) spans 693 to 713 (GGDKPPDRPRSLRSEALRPVK). Helical transmembrane passes span 864-884 (PPWL…PYAF), 888-908 (WADI…QIIV), 918-938 (VFEV…GTIS), 945-965 (FCFA…YIVL), 983-1003 (MFYA…GAVV), 1021-1041 (LDPL…ALVN), 1049-1069 (PSML…GANI), 1075-1095 (SSYL…NLYS), 1100-1120 (GLAF…GVAS), and 1184-1204 (LGFT…AATL).

Belongs to the ThrE exporter (TC 2.A.79) family.

Its subcellular location is the membrane. The chain is Pheromone-regulated membrane protein 10 from Yarrowia lipolytica (strain CLIB 122 / E 150) (Yeast).